Here is a 458-residue protein sequence, read N- to C-terminus: N-acetylgalactosamine kinase (458 aa).

Alpha-D-galactose contacts are provided by R43, E49, H50, and D52. ATP is bound by residues G143, S145, and S146. D190 serves as a coordination point for alpha-D-galactose. Catalysis depends on D190, which acts as the Proton acceptor. N233 and K234 together coordinate ATP.

This sequence belongs to the GHMP kinase family. GalK subfamily. As to quaternary structure, monomer.

It catalyses the reaction N-acetyl-alpha-D-galactosamine + ATP = N-acetyl-alpha-D-galactosamine 1-phosphate + ADP + H(+). Acts on GalNAc. Also acts as a galactokinase when galactose is present at high concentrations. May be involved in a salvage pathway for the reutilization of free GalNAc derived from the degradation of complex carbohydrates. This is N-acetylgalactosamine kinase (GALK2) from Homo sapiens (Human).